The following is a 410-amino-acid chain: Formyl-CoA:oxalate CoA-transferase (410 aa).

CoA is bound by residues 18 to 19 (QS), 72 to 75 (LNTK), 96 to 98 (NFG), Arg104, and 136 to 139 (KAYE). The Nucleophile role is filled by Asp168. The tract at residues 221 to 245 (PLAEYPNEDFGDEVPRSGNASGGGQ) is disordered. 243-245 (GGQ) lines the substrate pocket.

This sequence belongs to the CoA-transferase III family. Frc subfamily. In terms of assembly, homodimer.

It carries out the reaction formyl-CoA + oxalate = oxalyl-CoA + formate. The protein operates within metabolic intermediate degradation; oxalate degradation; CO(2) and formate from oxalate: step 1/2. In terms of biological role, involved in the catabolism of oxalate and in the adapatation to low pH via the induction of the oxalate-dependent acid tolerance response (ATR). Catalyzes the transfer of the CoA moiety from formyl-CoA to oxalate. This chain is Formyl-CoA:oxalate CoA-transferase, found in Streptomyces coelicolor (strain ATCC BAA-471 / A3(2) / M145).